Here is a 198-residue protein sequence, read N- to C-terminus: N-acetyltransferase 9-like protein (198 aa).

In terms of domain architecture, N-acetyltransferase spans 34–178; the sequence is EEIRRLTGSE…KEITMELPGE (145 aa).

The protein belongs to the acetyltransferase family. GNAT subfamily.

The protein is N-acetyltransferase 9-like protein of Caenorhabditis briggsae.